A 215-amino-acid chain; its full sequence is Ankyrin repeat domain-containing protein 49 (215 aa).

ANK repeat units follow at residues Asp-81 to Ala-110 and Leu-114 to Ala-143.

As to quaternary structure, interacts with Bdbt; interaction promotes the stability of both complex members.

The protein resides in the cytoplasm. It localises to the cytosol. It is found in the cell membrane. Required for regulating the establishment of planar cell polarity in the wing. Forms a complex with Bdbt which likely functions in the regulation of planar polarity by promoting the activity of Dco during planar polarity establishment. Within the complex, probably functions to stabilize Bdbt, while Bdbt directly promotes Dco activity in regulating phosphorylation of core proteins such as dsh, and asymmetric localization. This chain is Ankyrin repeat domain-containing protein 49, found in Drosophila melanogaster (Fruit fly).